The sequence spans 236 residues: MATPHINAQAGDFAETVLMPGDPLRAKFIAENFLEDVKQVCDVRNMFGYTGTYKGKKVSVMGHGMGIPSCCIYVHELIAEYGVKNVIRVGSCGAVHDDVKLMDVVIGMGASTDSKVNRIRFNNHDFAAIADFGLLETAVGQARELNVPVKVGNVFSADLFYSPEADLFDKMEKLGILGVDMEAAGIYGVAADLGAKALTILTVSDHIKRGEKLSSEDRQKSFNDMMTVALETAIKL.

His-5 lines the a purine D-ribonucleoside pocket. Residues Gly-21, Arg-25, Arg-44, and 88 to 91 (RVGS) contribute to the phosphate site. A purine D-ribonucleoside is bound by residues 180 to 182 (DME) and 204 to 205 (SD). The Proton donor role is filled by Asp-205.

It belongs to the PNP/UDP phosphorylase family. As to quaternary structure, homohexamer; trimer of homodimers.

It catalyses the reaction a purine D-ribonucleoside + phosphate = a purine nucleobase + alpha-D-ribose 1-phosphate. It carries out the reaction a purine 2'-deoxy-D-ribonucleoside + phosphate = a purine nucleobase + 2-deoxy-alpha-D-ribose 1-phosphate. Functionally, catalyzes the reversible phosphorolytic breakdown of the N-glycosidic bond in the beta-(deoxy)ribonucleoside molecules, with the formation of the corresponding free purine bases and pentose-1-phosphate. The protein is Purine nucleoside phosphorylase DeoD-type 2 of Aliivibrio fischeri (strain ATCC 700601 / ES114) (Vibrio fischeri).